Consider the following 324-residue polypeptide: tRNA dimethylallyltransferase (324 aa).

Residue 17–24 (GPTASGKT) coordinates ATP. 19-24 (TASGKT) provides a ligand contact to substrate. Interaction with substrate tRNA regions lie at residues 42-45 (DSAL), 166-170 (QRIQR), 251-256 (RCVGYR), and 284-291 (KRQITWLR).

It belongs to the IPP transferase family. Monomer. It depends on Mg(2+) as a cofactor.

It carries out the reaction adenosine(37) in tRNA + dimethylallyl diphosphate = N(6)-dimethylallyladenosine(37) in tRNA + diphosphate. In terms of biological role, catalyzes the transfer of a dimethylallyl group onto the adenine at position 37 in tRNAs that read codons beginning with uridine, leading to the formation of N6-(dimethylallyl)adenosine (i(6)A). The protein is tRNA dimethylallyltransferase of Burkholderia orbicola (strain AU 1054).